A 48-amino-acid chain; its full sequence is Large ribosomal subunit protein bL32 (48 aa).

This sequence belongs to the bacterial ribosomal protein bL32 family.

The polypeptide is Large ribosomal subunit protein bL32 (Helicobacter pylori (strain P12)).